The primary structure comprises 532 residues: Flavin-containing monooxygenase 3 (532 aa).

FAD is bound by residues 9–13, E32, 40–41, and 61–62; these read GAGVS, LW, and NS. NADP(+)-binding positions include 60–61 and 195–198; these read SN and SGCD. S401 carries the post-translational modification Phosphoserine. The chain crosses the membrane as a helical span at residues 510 to 530; sequence FFFHWLKLFAIPILLIAVFLV.

This sequence belongs to the FMO family. FAD is required as a cofactor. Liver.

It is found in the microsome membrane. The protein resides in the endoplasmic reticulum membrane. It catalyses the reaction trimethylamine + NADPH + O2 = trimethylamine N-oxide + NADP(+) + H2O. It carries out the reaction N,N-dimethylaniline + NADPH + O2 + H(+) = N,N-dimethylaniline N-oxide + NADP(+) + H2O. The enzyme catalyses hypotaurine + NADPH + O2 + H(+) = taurine + NADP(+) + H2O. The catalysed reaction is (S)-nicotine + NADPH + O2 = trans-(S)-nicotine N(1')-oxide + NADP(+) + H2O. It catalyses the reaction albendazole + NADPH + O2 + H(+) = albendazole S-oxide + NADP(+) + H2O. Functionally, essential hepatic enzyme that catalyzes the oxygenation of a wide variety of nitrogen- and sulfur-containing compounds including drugs as well as dietary compounds. Plays an important role in the metabolism of trimethylamine (TMA), via the production of trimethylamine N-oxide (TMAO) metabolite. TMA is generated by the action of gut microbiota using dietary precursors such as choline, choline containing compounds, betaine or L-carnitine. By regulating TMAO concentration, FMO3 directly impacts both platelet responsiveness and rate of thrombus formation. This chain is Flavin-containing monooxygenase 3 (FMO3), found in Homo sapiens (Human).